The chain runs to 1035 residues: FACT complex subunit SPT16 (1035 aa).

Positions 208–234 (EELKITNAKLSDKIENKIDDVKFLKQL) form a coiled coil. Residues 448–496 (NNEEEDNNKKKSSPATKVPSKPDRNSKILRTKLRGEARGGAEDAQKEQI) form a disordered region. The segment covering 480–496 (LRGEARGGAEDAQKEQI) has biased composition (basic and acidic residues). Phosphoserine is present on serine 526. Residues 636 to 666 (MSETFKQIADLKKEATKREQERKALADVVQQ) are a coiled coil. The residue at position 765 (serine 765) is a Phosphoserine. Disordered stretches follow at residues 768–796 (SVDE…QEQE) and 956–1035 (GSDD…NFRD). The segment covering 957-1019 (SDDEASDESE…ESEEGEDWDE (63 aa)) has biased composition (acidic residues). Positions 959 to 983 (DEASDESEEEVSEYEASEDDVSDES) form a coiled coil. Over residues 1020–1035 (LEKKAARADRGANFRD) the composition is skewed to basic and acidic residues.

Belongs to the peptidase M24 family. SPT16 subfamily. As to quaternary structure, forms a stable heterodimer with POB3. The SPT16-POB3 dimer weakly associates with multiple molecules of NHP6 (NHP6A or NHP6B) to form the FACT (yFACT or SNP) complex. The FACT complex interacts with the CK2 (casein kinase II) complex subunits CKA1, CKA2, CKB1 and CKB2 and the components of the transcription machinery CHD1, CTR9, PAF1 and CDC73. The FACT complex interacts with the PAF1 complex. Interacts with POL1. Interacts with SAS3. Interacts with YTA7.

It is found in the nucleus. The protein localises to the chromosome. Component of the FACT complex, a general chromatin factor that acts to reorganize nucleosomes. The FACT complex is involved in multiple processes that require DNA as a template such as mRNA elongation, DNA replication and DNA repair. During transcription elongation the FACT complex acts as a histone chaperone that both destabilizes and restores nucleosomal structure. It facilitates the passage of RNA polymerase II and transcription by promoting the dissociation of one histone H2A-H2B dimer from the nucleosome, then subsequently promotes the reestablishment of the nucleosome following the passage of RNA polymerase II. Transcription elongation is promoted by the repression of transcription initiation from cryptic sites. Also acts in establishing transcription initiation complexes and promotes SPT15/TBP-binding to a TATA box. Together with replication factor-A protein (RPA), FACT may play a role in nucleosome deposition during DNA replication. This chain is FACT complex subunit SPT16 (SPT16), found in Saccharomyces cerevisiae (strain ATCC 204508 / S288c) (Baker's yeast).